Reading from the N-terminus, the 126-residue chain is Protein ApaG (126 aa).

The ApaG domain occupies 2–126 (SQVESPIKIK…FRLAVPGIFQ (125 aa)).

This is Protein ApaG from Shewanella frigidimarina (strain NCIMB 400).